A 273-amino-acid polypeptide reads, in one-letter code: Shikimate dehydrogenase (NADP(+)) (273 aa).

Residues 15 to 17 (SKS) and T62 contribute to the shikimate site. K66 acts as the Proton acceptor in catalysis. Residue D78 participates in NADP(+) binding. 2 residues coordinate shikimate: N87 and D103. NADP(+)-binding positions include 127 to 131 (GAGGA), 150 to 155 (NRTHTR), A218, and G238.

It belongs to the shikimate dehydrogenase family. As to quaternary structure, homodimer.

The enzyme catalyses shikimate + NADP(+) = 3-dehydroshikimate + NADPH + H(+). It participates in metabolic intermediate biosynthesis; chorismate biosynthesis; chorismate from D-erythrose 4-phosphate and phosphoenolpyruvate: step 4/7. Functionally, involved in the biosynthesis of the chorismate, which leads to the biosynthesis of aromatic amino acids. Catalyzes the reversible NADPH linked reduction of 3-dehydroshikimate (DHSA) to yield shikimate (SA). The sequence is that of Shikimate dehydrogenase (NADP(+)) from Yersinia pseudotuberculosis serotype O:1b (strain IP 31758).